A 665-amino-acid polypeptide reads, in one-letter code: UvrABC system protein B (665 aa).

The region spanning 25-176 (NSIEKGNRFQ…NQRQLLRDLV (152 aa)) is the Helicase ATP-binding domain. An ATP-binding site is contributed by 38-45 (GATGTGKT). A Beta-hairpin motif is present at residues 91–114 (YYDYYQPEAYIPVSDTYIEKSASI). In terms of domain architecture, Helicase C-terminal spans 429–595 (QVDDLLGEIK…PIVTRSSNAI (167 aa)). Positions 626-661 (PELIGQLEEQMKEAAKKLEFEEAAKYRDRIQHLRDK) constitute a UVR domain.

It belongs to the UvrB family. Forms a heterotetramer with UvrA during the search for lesions. Interacts with UvrC in an incision complex.

It localises to the cytoplasm. The UvrABC repair system catalyzes the recognition and processing of DNA lesions. A damage recognition complex composed of 2 UvrA and 2 UvrB subunits scans DNA for abnormalities. Upon binding of the UvrA(2)B(2) complex to a putative damaged site, the DNA wraps around one UvrB monomer. DNA wrap is dependent on ATP binding by UvrB and probably causes local melting of the DNA helix, facilitating insertion of UvrB beta-hairpin between the DNA strands. Then UvrB probes one DNA strand for the presence of a lesion. If a lesion is found the UvrA subunits dissociate and the UvrB-DNA preincision complex is formed. This complex is subsequently bound by UvrC and the second UvrB is released. If no lesion is found, the DNA wraps around the other UvrB subunit that will check the other stand for damage. This is UvrABC system protein B from Gloeothece citriformis (strain PCC 7424) (Cyanothece sp. (strain PCC 7424)).